The chain runs to 613 residues: UvrABC system protein C (613 aa).

A GIY-YIG domain is found at 13–92; that stretch reads DKSGVYIMKD…IKKYKPKYNI (80 aa). The 36-residue stretch at 204–239 folds into the UVR domain; sequence DEIINDLRIQMETAAEQLDFEKAAQLRNKITSIKQL.

It belongs to the UvrC family. As to quaternary structure, interacts with UvrB in an incision complex.

Its subcellular location is the cytoplasm. In terms of biological role, the UvrABC repair system catalyzes the recognition and processing of DNA lesions. UvrC both incises the 5' and 3' sides of the lesion. The N-terminal half is responsible for the 3' incision and the C-terminal half is responsible for the 5' incision. This is UvrABC system protein C from Ruminiclostridium cellulolyticum (strain ATCC 35319 / DSM 5812 / JCM 6584 / H10) (Clostridium cellulolyticum).